A 501-amino-acid polypeptide reads, in one-letter code: Oxygen-independent coproporphyrinogen-III oxidase-like protein HemZ (501 aa).

In terms of domain architecture, Radical SAM core spans 163–405; that stretch reads DLYRVKDEVS…VAWTKEHGYV (243 aa). Position 174 (Tyr174) interacts with S-adenosyl-L-methionine. Residues Cys180 and Cys184 each coordinate [4Fe-4S] cluster. Tyr186 provides a ligand contact to S-adenosyl-L-methionine. Cys187 lines the [4Fe-4S] cluster pocket. S-adenosyl-L-methionine is bound by residues Gly233, 234-235, Glu267, Gln295, Arg307, and Asp332; that span reads GT.

Belongs to the anaerobic coproporphyrinogen-III oxidase family. HemZ subfamily. [4Fe-4S] cluster is required as a cofactor.

It functions in the pathway porphyrin-containing compound metabolism; protoporphyrin-IX biosynthesis. Its function is as follows. Involved in the biosynthesis of porphyrin-containing compound. The polypeptide is Oxygen-independent coproporphyrinogen-III oxidase-like protein HemZ (hemZ) (Bacillus subtilis (strain 168)).